The following is a 225-amino-acid chain: UPF0758 protein XOO0495 (225 aa).

The 123-residue stretch at 102-224 folds into the MPN domain; that stretch reads ALSDPPSVGR…PVSLAERGWL (123 aa). H173, H175, and D186 together coordinate Zn(2+). The short motif at 173 to 186 is the JAMM motif element; the sequence is HNHPSGNPEPSKAD.

It belongs to the UPF0758 family.

This Xanthomonas oryzae pv. oryzae (strain KACC10331 / KXO85) protein is UPF0758 protein XOO0495.